We begin with the raw amino-acid sequence, 445 residues long: Branched-chain amino acid permease BraB (445 aa).

The next 12 membrane-spanning stretches (helical) occupy residues 11 to 31, 45 to 65, 79 to 99, 122 to 142, 158 to 178, 192 to 212, 233 to 253, 275 to 295, 311 to 331, 339 to 359, 375 to 395, and 415 to 435; these read IIIGFMLFALFFGAGNMIYPP, IGGFLLTGVGLPLLGIIAIAL, PVFGTIFTVVLYLSIGPLFAI, LSLLIFTLIFFGVTYYLALNP, FTIILIIVLKAIFTPMGGLGA, FLEGYKTMDALASIVFGVVVV, AGVIAALGLTFIYVSLAYLGA, YLFGSLGNIVLGAAITVACLT, LIPALSYKIVVTIVTLFSLII, IIAFSVPILSAIYPLAIVIIV, IACLIGTGLFSILDGIKAAGF, and IGWVLPGIVGAVIGYVLTLFI.

Belongs to the branched chain amino acid transporter family.

It is found in the cell membrane. Its function is as follows. Branched-chain amino acid transport system which is involved in the uptake of isoleucine, valine and probably leucine. Together with BcaP and BrnQ, plays an important role in the activation of CodY, a branched-chain amino acid-responsive transcriptional regulator that controls the expression of several dozen transcription units in B.subtilis. This Bacillus subtilis (strain 168) protein is Branched-chain amino acid permease BraB.